A 284-amino-acid polypeptide reads, in one-letter code: Tryptophan synthase alpha chain (284 aa).

Active-site proton acceptor residues include Glu59 and Asp70.

The protein belongs to the TrpA family. Tetramer of two alpha and two beta chains.

It carries out the reaction (1S,2R)-1-C-(indol-3-yl)glycerol 3-phosphate + L-serine = D-glyceraldehyde 3-phosphate + L-tryptophan + H2O. The protein operates within amino-acid biosynthesis; L-tryptophan biosynthesis; L-tryptophan from chorismate: step 5/5. The alpha subunit is responsible for the aldol cleavage of indoleglycerol phosphate to indole and glyceraldehyde 3-phosphate. This is Tryptophan synthase alpha chain from Azospirillum brasilense.